Consider the following 658-residue polypeptide: Protein teflon (658 aa).

The segment at 33–56 adopts a C2H2-type 1 zinc-finger fold; it reads LYCHFCRDLFTQLPEFLRHLQGAH. Disordered stretches follow at residues 78 to 127 and 151 to 175; these read EQDD…SEQK and HINN…SESN. Positions 100 to 111 are enriched in basic and acidic residues; the sequence is IPAKSEDSRAID. The segment covering 118–127 has biased composition (polar residues); that stretch reads DNSPVKSEQK. Residues 608-630 form a C2H2-type 2; degenerate zinc finger; that stretch reads YFCKCCDDIFTLNEDYTRHLVSQ. Residues 634 to 657 form a C2H2-type 3 zinc finger; it reads YQCTKCIKAFKYRGHFEKHLQNVH.

The protein belongs to the Teflon family.

The protein localises to the nucleus. The protein resides in the chromosome. Its function is as follows. Specifically required in males for proper segregation of autosomal bivalents at meiosis I. Expression is required in the male germ line prior to spermatocyte stage S4. May have a role as a bridging molecule maintaining adhesion to hold autosome bivalents together via heterochromatic connections. The polypeptide is Protein teflon (Drosophila erecta (Fruit fly)).